The chain runs to 142 residues: Large ribosomal subunit protein uL13 (142 aa).

This sequence belongs to the universal ribosomal protein uL13 family. Part of the 50S ribosomal subunit.

In terms of biological role, this protein is one of the early assembly proteins of the 50S ribosomal subunit, although it is not seen to bind rRNA by itself. It is important during the early stages of 50S assembly. The chain is Large ribosomal subunit protein uL13 from Chromobacterium violaceum (strain ATCC 12472 / DSM 30191 / JCM 1249 / CCUG 213 / NBRC 12614 / NCIMB 9131 / NCTC 9757 / MK).